Consider the following 411-residue polypeptide: Anthranilate synthase component 1 (411 aa).

L-tryptophan is bound by residues serine 27 and 203–205 (PYM). 237 to 238 (GT) contributes to the chorismate binding site. Glutamate 262 is a Mg(2+) binding site. Chorismate contacts are provided by residues tyrosine 350, arginine 369, 382 to 384 (GAG), and glycine 384. Glutamate 397 is a binding site for Mg(2+).

This sequence belongs to the anthranilate synthase component I family. As to quaternary structure, heterotetramer consisting of two non-identical subunits: a beta subunit (TrpG) and a large alpha subunit (TrpE). Mg(2+) is required as a cofactor.

The enzyme catalyses chorismate + L-glutamine = anthranilate + pyruvate + L-glutamate + H(+). The protein operates within amino-acid biosynthesis; L-tryptophan biosynthesis; L-tryptophan from chorismate: step 1/5. Feedback inhibited by tryptophan. Part of a heterotetrameric complex that catalyzes the two-step biosynthesis of anthranilate, an intermediate in the biosynthesis of L-tryptophan. In the first step, the glutamine-binding beta subunit (TrpG) of anthranilate synthase (AS) provides the glutamine amidotransferase activity which generates ammonia as a substrate that, along with chorismate, is used in the second step, catalyzed by the large alpha subunit of AS (TrpE) to produce anthranilate. In the absence of TrpG, TrpE can synthesize anthranilate directly from chorismate and high concentrations of ammonia. In Archaeoglobus fulgidus (strain ATCC 49558 / DSM 4304 / JCM 9628 / NBRC 100126 / VC-16), this protein is Anthranilate synthase component 1 (trpE).